Here is a 145-residue protein sequence, read N- to C-terminus: Androgenic gland hormone (145 aa).

Positions M1 to A21 are cleaved as a signal peptide. Cystine bridges form between C33-C122, C42-C59, C44-C140, and C123-C131. A propeptide spans S68–S112 (c peptide). An N-linked (GlcNAc...) asparagine glycan is attached at N132.

Androgenic gland.

The protein localises to the secreted. In terms of biological role, controls sex differentiation and the formation of male appendages, spermatogenesis, pigmentation, and male specific behavior. This is Androgenic gland hormone (AGH) from Porcellio scaber (Common rough woodlouse).